Consider the following 412-residue polypeptide: 1-deoxy-D-xylulose 5-phosphate reductoisomerase (412 aa).

NADPH-binding residues include Thr-10, Gly-11, Ser-12, Ile-13, Gly-36, Lys-37, Asn-38, and Asn-130. Lys-131 contacts 1-deoxy-D-xylulose 5-phosphate. Glu-132 provides a ligand contact to NADPH. Asp-156 lines the Mn(2+) pocket. 1-deoxy-D-xylulose 5-phosphate-binding residues include Ser-157, Glu-158, Ser-194, and His-217. Position 158 (Glu-158) interacts with Mn(2+). NADPH is bound at residue Gly-223. 1-deoxy-D-xylulose 5-phosphate contacts are provided by Ser-230, Asn-235, Lys-236, and Glu-239. A Mn(2+)-binding site is contributed by Glu-239.

Belongs to the DXR family. The cofactor is Mg(2+). Mn(2+) is required as a cofactor.

It catalyses the reaction 2-C-methyl-D-erythritol 4-phosphate + NADP(+) = 1-deoxy-D-xylulose 5-phosphate + NADPH + H(+). It participates in isoprenoid biosynthesis; isopentenyl diphosphate biosynthesis via DXP pathway; isopentenyl diphosphate from 1-deoxy-D-xylulose 5-phosphate: step 1/6. Functionally, catalyzes the NADPH-dependent rearrangement and reduction of 1-deoxy-D-xylulose-5-phosphate (DXP) to 2-C-methyl-D-erythritol 4-phosphate (MEP). The protein is 1-deoxy-D-xylulose 5-phosphate reductoisomerase of Prochlorococcus marinus (strain NATL2A).